Consider the following 1203-residue polypeptide: MIDVNNFEYMKIGLASPDKIRSWSYGEVKKPETINYRTLKPEKDGLFCERIFGPQKDWECHCGKYKRVRYKGVVCDRCGVEVTRAKVRRERMGHIELAAPVSHIWYFKGIPSRMGLVLDMSPRALEEVIYFASYVVTESGDTPLDKKQLLSEKEYRAYRDRYGSTFQAAMGAEAIKKLLQDIDLDKEVDFLKEELKTAQGQRRTRAIKRLEVLEAFRNSGNEPSWMILDVLPVIPPELRPMVQLDGGRFATSDLNDLYRRVINRNNRLKRLLDLGAPSIIVQNEKRMLQEAVDALIDNGRRGRPVTGPGNRPLKSLSHMLKGKQGRFRQNLLGKRVDYSGRSVIVVGPNLKMYQCGLPKEMALELFKPFVMKELVEKGLAHNIKSAKRKIERVQPEVWDVLESVIKEHPVLLNRAPTLHRLGIQAFEPTLVEGRAIRLHPLVCTAYNADFDGDQMAVHVPLSSEAQAEARLLMLAAQNILNPKDGKPVVTPSQDMVLGNYYLTLEREGAIGEGMVFKDANEALLAYQNGYVHLHTRVAVAASAVNNATFTEEQKSMLLLTTVGKLIFNEILPESFPYINEPTNSNLEKETPAKYFVEKGANIKEIIASREEVAPFSKKILGNIIAEVFKRFKITETSRMLDRMKNLGFKYSTKAGITVGVSDILVLGEKDEILHEAQAKVDNVIKQFRRGLITEEERYDRVISIWSNAKDVIQGKLMKSLNKRNPIFMMSDSGARGNASNFTQLAGMRGLMANPSGRIIELPIKSSFREGLTVLEYFISTHGARKGLADTALKTADSGYLTRRLVDVAQDVIVREDDCGTDRGLLIGAIKEGNEVIESLYDRLVGRFARKTVKHPETGEVLVAENQLITEDIAHIVENSGVETVNIRSAFTCNTRHGVCKKCYGRNLATGTDVEVGEAVGIIAAQSIGEPGTQLTMRTFHTGGVAGDDITQGLPRIQEIFEARNPKGQAVISEIDGVIAAINDVKDRQEVVVQGEVEARTYAIPYGARLKVIPGQKISHGKELTEGSIDPKELLKVTDITAVQEYLLREVQKVYRMQGVEIGDKHVEVMVRQMLRKVRVSDAGETDVLPGTLLDIHQFTDANAKVLLQGKQPATARPVLLGITKASLETDSFLSAASFQETTRVLTDAAIKGKRDELLGLKENVIIGKLVPAGTGMNRYRKVDLVKTTQDDMNVENDEVYVEQ.

4 residues coordinate Zn(2+): C60, C62, C75, and C78. Mg(2+)-binding residues include D449, D451, and D453. 4 residues coordinate Zn(2+): C818, C892, C899, and C902.

This sequence belongs to the RNA polymerase beta' chain family. In terms of assembly, the RNAP catalytic core consists of 2 alpha, 1 beta, 1 beta' and 1 omega subunit. When a sigma factor is associated with the core the holoenzyme is formed, which can initiate transcription. Requires Mg(2+) as cofactor. The cofactor is Zn(2+).

The catalysed reaction is RNA(n) + a ribonucleoside 5'-triphosphate = RNA(n+1) + diphosphate. DNA-dependent RNA polymerase catalyzes the transcription of DNA into RNA using the four ribonucleoside triphosphates as substrates. In Bacillus cereus (strain ZK / E33L), this protein is DNA-directed RNA polymerase subunit beta'.